The chain runs to 700 residues: AP-1-like transcription factor yap1 (700 aa).

Disordered regions lie at residues 17-185 and 228-296; these read SPGH…KDLE and MPVN…VSLR. The short motif at 34–41 is the Bipartite nuclear localization signal element; the sequence is MPVPGRDT. Positions 47–59 are enriched in polar residues; the sequence is PSVSNGSQPSAHQ. Residues 67–74 carry the Bipartite nuclear localization signal motif; sequence SPTPEMPP. Positions 103 to 112 are enriched in acidic residues; sequence LDDDDDDASD. The segment covering 127 to 138 has biased composition (low complexity); it reads AGRAAAASASGS. Basic and acidic residues predominate over residues 150-185; that stretch reads GDGKRELSKSERRKEQNRAAQKAFRERREAKVKDLE. The region spanning 156–219 is the bZIP domain; it reads LSKSERRKEQ…KRLQEENVAL (64 aa). The interval 158-182 is basic motif; that stretch reads KSERRKEQNRAAQKAFRERREAKVK. Positions 184 to 191 are leucine-zipper; it reads LEDKVAEL. Transcription activation stretches follow at residues 213–400 and 452–577; these read QEEN…QPDS and LGAT…GRGN. The segment covering 231–244 has biased composition (low complexity); that stretch reads NSRNSPNSNNGSFS. Over residues 280 to 296 the composition is skewed to polar residues; sequence SANTISDNSSESLVSLR. Residues 306–318 form a n-CRD region; sequence FSDHFNTYALGVV. Disordered regions lie at residues 320-359 and 542-609; these read VPPPSSSSQPTQKYPSASNGQQSISSNSNSSNVISPPSAD and NYLN…KATT. Composition is skewed to low complexity over residues 335 to 358 and 542 to 573; these read SASNGQQSISSNSNSSNVISPPSA and NYLNMSPSPMMPLSNSQSPQSSDSRSNTNVSS. The span at 589–607 shows a compositional bias: polar residues; the sequence is MGSSRTSVSHDSTDLQGKA. The tract at residues 642–675 is c-CRD; it reads PSELWMRFGMQHENSTEHLLIDDLCDQMRAKATC. Residues 660–667 carry the Nuclear export signal motif; that stretch reads LLIDDLCD. Cysteines 666 and 675 form a disulfide.

This sequence belongs to the bZIP family. YAP subfamily. In terms of processing, depending on the oxidative stress inducing agent, yap1 can undergo two distinct conformational changes, both involving disulfide bond formation, and both masking the nuclear export signal, thus abolishing nuclear export.

The protein resides in the nucleus. Its subcellular location is the cytoplasm. In terms of biological role, transcription activator involved in oxidative stress response and redox homeostasis. Regulates the transcription of genes encoding antioxidant enzymes and components of the cellular thiol-reducing pathways. Involved in antifungal resistance to fluconazole. The sequence is that of AP-1-like transcription factor yap1 from Cryptococcus neoformans var. grubii serotype A (strain H99 / ATCC 208821 / CBS 10515 / FGSC 9487) (Filobasidiella neoformans var. grubii).